We begin with the raw amino-acid sequence, 27 residues long: uncharacterized protein (27 aa).

It localises to the plastid. Its subcellular location is the cyanelle. This is an uncharacterized protein from Cyanophora paradoxa.